Here is a 65-residue protein sequence, read N- to C-terminus: Small ribosomal subunit protein bS21 (65 aa).

Belongs to the bacterial ribosomal protein bS21 family.

The polypeptide is Small ribosomal subunit protein bS21 (Chlorobium limicola (strain DSM 245 / NBRC 103803 / 6330)).